Consider the following 304-residue polypeptide: Quinolinate synthase (304 aa).

Iminosuccinate contacts are provided by His-24 and Ser-41. Cys-86 contacts [4Fe-4S] cluster. Iminosuccinate-binding positions include 112–114 (YVN) and Ser-129. [4Fe-4S] cluster is bound at residue Cys-171. Iminosuccinate contacts are provided by residues 197 to 199 (HPE) and Thr-214. [4Fe-4S] cluster is bound at residue Cys-259.

This sequence belongs to the quinolinate synthase family. Type 2 subfamily. [4Fe-4S] cluster is required as a cofactor.

The protein resides in the cytoplasm. It carries out the reaction iminosuccinate + dihydroxyacetone phosphate = quinolinate + phosphate + 2 H2O + H(+). It functions in the pathway cofactor biosynthesis; NAD(+) biosynthesis; quinolinate from iminoaspartate: step 1/1. Catalyzes the condensation of iminoaspartate with dihydroxyacetone phosphate to form quinolinate. This chain is Quinolinate synthase, found in Geobacter metallireducens (strain ATCC 53774 / DSM 7210 / GS-15).